The primary structure comprises 39 residues: Omega-actinopoditoxin-Mb1a (39 aa).

Intrachain disulfides connect C4-C19, C11-C30, and C18-C38.

Contains 3 disulfide bonds. In terms of tissue distribution, expressed by the venom gland.

It is found in the secreted. Functionally, potent inhibitor of insect, but not mammalian, voltage-gated calcium channels (Cav). This chain is Omega-actinopoditoxin-Mb1a, found in Missulena bradleyi (Eastern mouse spider).